The chain runs to 398 residues: Delta-aminolevulinic acid dehydratase, chloroplastic (398 aa).

The segment at 48–87 is disordered; sequence VPEAPPVPPTPASPAGTPVVPSLPIQRRPRRNRRSPALRS. The segment covering 50-59 has biased composition (pro residues); that stretch reads EAPPVPPTPA. The span at 60-69 shows a compositional bias: low complexity; that stretch reads SPAGTPVVPS. Positions 74 to 83 are enriched in basic residues; sequence RRPRRNRRSP. Lys-266 acts as the Schiff-base intermediate with substrate in catalysis. Residues Arg-276 and Lys-288 each contribute to the 5-aminolevulinate site. Glu-304 lines the Mg(2+) pocket. Lys-319 serves as the catalytic Schiff-base intermediate with substrate. 2 residues coordinate 5-aminolevulinate: Ser-345 and Tyr-384.

This sequence belongs to the ALAD family. In terms of assembly, homooctamer; formed by oligomerization of dimers. Probably also forms lower oligomers. The cofactor is Mg(2+).

It is found in the plastid. The protein resides in the chloroplast. It carries out the reaction 2 5-aminolevulinate = porphobilinogen + 2 H2O + H(+). Its pathway is porphyrin-containing compound metabolism; protoporphyrin-IX biosynthesis; coproporphyrinogen-III from 5-aminolevulinate: step 1/4. With respect to regulation, activated by magnesium. Inhibited by succinyl acetone. Enzyme activity may depend on the oligomerization state, where the fully active octamer may dissociate and reassemble into less active lower oligomers. Catalyzes an early step in the biosynthesis of tetrapyrroles. Binds two molecules of 5-aminolevulinate per subunit, each at a distinct site, and catalyzes their condensation to form porphobilinogen. The sequence is that of Delta-aminolevulinic acid dehydratase, chloroplastic (HEMB) from Pisum sativum (Garden pea).